A 300-amino-acid chain; its full sequence is Bifunctional protein FolD (300 aa).

NADP(+) is bound by residues 172–174, serine 206, and isoleucine 247; that span reads GRS.

This sequence belongs to the tetrahydrofolate dehydrogenase/cyclohydrolase family. Homodimer.

The enzyme catalyses (6R)-5,10-methylene-5,6,7,8-tetrahydrofolate + NADP(+) = (6R)-5,10-methenyltetrahydrofolate + NADPH. The catalysed reaction is (6R)-5,10-methenyltetrahydrofolate + H2O = (6R)-10-formyltetrahydrofolate + H(+). It participates in one-carbon metabolism; tetrahydrofolate interconversion. Its function is as follows. Catalyzes the oxidation of 5,10-methylenetetrahydrofolate to 5,10-methenyltetrahydrofolate and then the hydrolysis of 5,10-methenyltetrahydrofolate to 10-formyltetrahydrofolate. This is Bifunctional protein FolD from Rhodopirellula baltica (strain DSM 10527 / NCIMB 13988 / SH1).